Consider the following 215-residue polypeptide: Pyridoxine/pyridoxamine 5'-phosphate oxidase (215 aa).

Residues R9–Y12 and K69 each bind substrate. FMN-binding positions include R64–K69, F79–T80, K86, and Q108. Y126, R130, and S134 together coordinate substrate. FMN contacts are provided by residues Q143–S144 and W188. A substrate-binding site is contributed by R194 to H196. R198 serves as a coordination point for FMN.

This sequence belongs to the pyridoxamine 5'-phosphate oxidase family. In terms of assembly, homodimer. Requires FMN as cofactor.

The catalysed reaction is pyridoxamine 5'-phosphate + O2 + H2O = pyridoxal 5'-phosphate + H2O2 + NH4(+). It carries out the reaction pyridoxine 5'-phosphate + O2 = pyridoxal 5'-phosphate + H2O2. It participates in cofactor metabolism; pyridoxal 5'-phosphate salvage; pyridoxal 5'-phosphate from pyridoxamine 5'-phosphate: step 1/1. It functions in the pathway cofactor metabolism; pyridoxal 5'-phosphate salvage; pyridoxal 5'-phosphate from pyridoxine 5'-phosphate: step 1/1. Catalyzes the oxidation of either pyridoxine 5'-phosphate (PNP) or pyridoxamine 5'-phosphate (PMP) into pyridoxal 5'-phosphate (PLP). The polypeptide is Pyridoxine/pyridoxamine 5'-phosphate oxidase (Pseudomonas fluorescens (strain Pf0-1)).